The sequence spans 219 residues: UPF0173 metal-dependent hydrolase LSL_0324 (219 aa).

Belongs to the UPF0173 family.

The sequence is that of UPF0173 metal-dependent hydrolase LSL_0324 from Ligilactobacillus salivarius (strain UCC118) (Lactobacillus salivarius).